The primary structure comprises 156 residues: ATP synthase subunit b (156 aa).

Residues 12-32 (VAFLIFVLFCMKFIWPPVIAA) form a helical membrane-spanning segment.

This sequence belongs to the ATPase B chain family. In terms of assembly, F-type ATPases have 2 components, F(1) - the catalytic core - and F(0) - the membrane proton channel. F(1) has five subunits: alpha(3), beta(3), gamma(1), delta(1), epsilon(1). F(0) has three main subunits: a(1), b(2) and c(10-14). The alpha and beta chains form an alternating ring which encloses part of the gamma chain. F(1) is attached to F(0) by a central stalk formed by the gamma and epsilon chains, while a peripheral stalk is formed by the delta and b chains.

The protein resides in the cell inner membrane. Functionally, f(1)F(0) ATP synthase produces ATP from ADP in the presence of a proton or sodium gradient. F-type ATPases consist of two structural domains, F(1) containing the extramembraneous catalytic core and F(0) containing the membrane proton channel, linked together by a central stalk and a peripheral stalk. During catalysis, ATP synthesis in the catalytic domain of F(1) is coupled via a rotary mechanism of the central stalk subunits to proton translocation. In terms of biological role, component of the F(0) channel, it forms part of the peripheral stalk, linking F(1) to F(0). The sequence is that of ATP synthase subunit b from Pseudomonas fluorescens (strain ATCC BAA-477 / NRRL B-23932 / Pf-5).